The following is a 563-amino-acid chain: uncharacterized protein (563 aa).

Residues 30-303 (QSIEIQPEEK…EKSPEKQVEI (274 aa)) form a disordered region. Over residues 36-56 (PEEKPSEEKQPEEKSSEEKPK) the composition is skewed to basic and acidic residues. Residues 61-72 (SAINSEKTQKPI) show a composition bias toward polar residues. Composition is skewed to basic and acidic residues over residues 101–115 (TTER…DDKQ), 123–276 (ERGR…EPRP), and 282–303 (EKSP…QVEI).

The protein belongs to the mimivirus L41 family.

This is an uncharacterized protein from Acanthamoeba polyphaga (Amoeba).